The following is a 74-amino-acid chain: ATP synthase subunit 9, mitochondrial (74 aa).

Transmembrane regions (helical) follow at residues 8–28 (MGAG…GNVF) and 50–70 (ILGF…AFLI).

Belongs to the ATPase C chain family. F-type ATPases have 2 components, CF(1) - the catalytic core - and CF(0) - the membrane proton channel. CF(1) has five subunits: alpha(3), beta(3), gamma(1), delta(1), epsilon(1). CF(0) has three main subunits: a, b and c.

Its subcellular location is the mitochondrion membrane. Its function is as follows. This protein is one of the chains of the nonenzymatic membrane component (F0) of mitochondrial ATPase. This chain is ATP synthase subunit 9, mitochondrial (ATP9), found in Solanum tuberosum (Potato).